Here is a 527-residue protein sequence, read N- to C-terminus: Serine/threonine-protein kinase NLK (527 aa).

Sufficient for interaction with DAPK3 stretches follow at residues 1–125 (MSLC…KAHH) and 124–416 (HHHQ…SKRI). Required for interaction with TAB2 stretches follow at residues 1 to 304 (MSLC…VVTQ) and 434 to 527 (YHTC…LVWE). Disordered stretches follow at residues 22–72 (AAAA…SSAA) and 90–140 (QQPY…DIEP). A compositionally biased stretch (basic residues) spans 26 to 54 (GHHHHHHHHLPHLPPPHLHHHHHPQHHLH). Residues 103–119 (PGPAAAAPAQVQAAAAA) show a composition bias toward low complexity. Residues 122-131 (KAHHHQHSHH) are compositionally biased toward basic residues. Positions 138–427 (IEPDRPIGYG…AKDALAHPYL (290 aa)) constitute a Protein kinase domain. ATP contacts are provided by residues 144–152 (IGYGAFGVV) and lysine 167. Aspartate 264 (proton acceptor) is an active-site residue. Threonine 298 is subject to Phosphothreonine; by autocatalysis. Positions 298-300 (TQE) match the TQE motif. Positions 428–527 (DEGRLRYHTC…EMPPSPLVWE (100 aa)) are required for homodimerization and kinase activation and localization to the nucleus. The residue at position 522 (serine 522) is a Phosphoserine.

It belongs to the protein kinase superfamily. CMGC Ser/Thr protein kinase family. MAP kinase subfamily. In terms of assembly, homodimer. Homodimerization is required for intermolecular autophosphorylation, kinase activation and nuclear localization. May interact with components of cullin-RING-based SCF (SKP1-CUL1-F-box protein) E3 ubiquitin-protein ligase complexes. Interacts with LEF1, MEF2A, MYBL1 and MYBL2. Interacts with the upstream activating kinases HIPK2 and MAP3K7/TAK1. Interaction with MAP3K7/TAK1 seems to be indirect, and may be mediated by other proteins such as STAT3, TAB1 and TAB2. Interacts with and phosphorylates a number of transcription factors including FOXO1, FOXO3, FOXO4, MYB, NOTCH1 and TCF7L2/TCF4. Interacts with DAPK3/ZIPK, and this interaction may disrupt interaction with transcription factors such as TCF7L2/TCF4. Forms a transcriptional repressor complex with CHD7, PPARG and SETDB1. Interacts with RNF138/NARF. Interacts with ATF5; the interaction stabilizes ATF5 at the protein level in a kinase-independent manner. Mg(2+) serves as cofactor. Post-translationally, phosphorylated on Thr-298. Intermolecular autophosphorylation on Thr-298 activates the enzyme.

The protein resides in the nucleus. It is found in the cytoplasm. It carries out the reaction L-seryl-[protein] + ATP = O-phospho-L-seryl-[protein] + ADP + H(+). The catalysed reaction is L-threonyl-[protein] + ATP = O-phospho-L-threonyl-[protein] + ADP + H(+). Activated by the non-canonical Wnt signaling pathway, in which WNT5A leads to activation of MAP3K7/TAK1 and HIPK2, which subsequently phosphorylates and activates this protein. Activated by dimerization and subsequent intermolecular autophosphorylation on Thr-298. Other cytokines such as IL6 may also activate this regulatory circuit. Its function is as follows. Serine/threonine-protein kinase that regulates a number of transcription factors with key roles in cell fate determination. Positive effector of the non-canonical Wnt signaling pathway, acting downstream of WNT5A, MAP3K7/TAK1 and HIPK2. Negative regulator of the canonical Wnt/beta-catenin signaling pathway. Binds to and phosphorylates TCF7L2/TCF4 and LEF1, promoting the dissociation of the TCF7L2/LEF1/beta-catenin complex from DNA, as well as the ubiquitination and subsequent proteolysis of LEF1. Together these effects inhibit the transcriptional activation of canonical Wnt/beta-catenin target genes. Negative regulator of the Notch signaling pathway. Binds to and phosphorylates NOTCH1, thereby preventing the formation of a transcriptionally active ternary complex of NOTCH1, RBPJ/RBPSUH and MAML1. Negative regulator of the MYB family of transcription factors. Phosphorylation of MYB leads to its subsequent proteolysis while phosphorylation of MYBL1 and MYBL2 inhibits their interaction with the coactivator CREBBP. Other transcription factors may also be inhibited by direct phosphorylation of CREBBP itself. Acts downstream of IL6 and MAP3K7/TAK1 to phosphorylate STAT3, which is in turn required for activation of NLK by MAP3K7/TAK1. Upon IL1B stimulus, cooperates with ATF5 to activate the transactivation activity of C/EBP subfamily members. Phosphorylates ATF5 but also stabilizes ATF5 protein levels in a kinase-independent manner. Acts as an inhibitor of the mTORC1 complex in response to osmotic stress by mediating phosphorylation of RPTOR, thereby preventing recruitment of the mTORC1 complex to lysosomes. In Canis lupus familiaris (Dog), this protein is Serine/threonine-protein kinase NLK (NLK).